Reading from the N-terminus, the 223-residue chain is Dephospho-CoA kinase (223 aa).

One can recognise a DPCK domain in the interval 22-223; the sequence is LIGLSGPSCS…LLQEVKKRGF (202 aa). Position 30–35 (30–35) interacts with ATP; the sequence is CSGKNT.

It belongs to the CoaE family.

It is found in the cytoplasm. It carries out the reaction 3'-dephospho-CoA + ATP = ADP + CoA + H(+). It functions in the pathway cofactor biosynthesis; coenzyme A biosynthesis; CoA from (R)-pantothenate: step 5/5. Catalyzes the phosphorylation of the 3'-hydroxyl group of dephosphocoenzyme A to form coenzyme A. This Treponema denticola (strain ATCC 35405 / DSM 14222 / CIP 103919 / JCM 8153 / KCTC 15104) protein is Dephospho-CoA kinase.